A 295-amino-acid chain; its full sequence is Acetylglutamate kinase (295 aa).

Substrate contacts are provided by residues 66-67, Arg88, and Asn193; that span reads GG.

This sequence belongs to the acetylglutamate kinase family. ArgB subfamily.

It is found in the cytoplasm. The catalysed reaction is N-acetyl-L-glutamate + ATP = N-acetyl-L-glutamyl 5-phosphate + ADP. The protein operates within amino-acid biosynthesis; L-arginine biosynthesis; N(2)-acetyl-L-ornithine from L-glutamate: step 2/4. Functionally, catalyzes the ATP-dependent phosphorylation of N-acetyl-L-glutamate. This Rhizobium etli (strain ATCC 51251 / DSM 11541 / JCM 21823 / NBRC 15573 / CFN 42) protein is Acetylglutamate kinase.